The following is a 164-amino-acid chain: ATP synthase subunit b 2 (164 aa).

The chain crosses the membrane as a helical span at residues 4–24 (TFWAFVGLVLFLALLVYFQIP).

The protein belongs to the ATPase B chain family. In terms of assembly, F-type ATPases have 2 components, F(1) - the catalytic core - and F(0) - the membrane proton channel. F(1) has five subunits: alpha(3), beta(3), gamma(1), delta(1), epsilon(1). F(0) has three main subunits: a(1), b(2) and c(10-14). The alpha and beta chains form an alternating ring which encloses part of the gamma chain. F(1) is attached to F(0) by a central stalk formed by the gamma and epsilon chains, while a peripheral stalk is formed by the delta and b chains.

The protein localises to the cell inner membrane. Functionally, f(1)F(0) ATP synthase produces ATP from ADP in the presence of a proton or sodium gradient. F-type ATPases consist of two structural domains, F(1) containing the extramembraneous catalytic core and F(0) containing the membrane proton channel, linked together by a central stalk and a peripheral stalk. During catalysis, ATP synthesis in the catalytic domain of F(1) is coupled via a rotary mechanism of the central stalk subunits to proton translocation. Its function is as follows. Component of the F(0) channel, it forms part of the peripheral stalk, linking F(1) to F(0). In Bartonella tribocorum (strain CIP 105476 / IBS 506), this protein is ATP synthase subunit b 2.